A 1157-amino-acid polypeptide reads, in one-letter code: Probable inactive leucine-rich repeat receptor kinase XIAO (1157 aa).

The signal sequence occupies residues 1–21; that stretch reads MPPPPRLLFLLVMLLVVAAPG. An N-linked (GlcNAc...) asparagine glycan is attached at Asn-58. LRR repeat units lie at residues 101–125, 127–149, 150–172, 173–196, 198–220, 221–245, 247–269, 270–293, 296–319, 320–343, 344–367, 368–391, 393–414, 415–439, 440–463, 464–487, 489–511, 513–536, 537–559, 561–583, 584–608, 609–631, 632–656, 658–680, 681–704, and 706–728; these read LVYLEKLSLRSNSLSGTIPASLSRI, SLRAVYLQYNSLSGPIPQSFLAN, LTNLQTFDVSGNLLSGPVPVSFP, PSLKYLDLSSNAFSGTIPANVSAS, TSLQFLNLSFNRLRGTVPASLGT, LQDLHYLWLDGNLLEGTIPSALSNC, ALLHLSLQGNALRGILPPAVAAI, PSLQILSVSRNRLTGAIPAAAFGG, NSSLRIVQVGGNAFSQVDVPVSLG, KDLQVVDLRANKLAGPFPSWLAGA, GGLTVLDLSGNAFTGEVPPAVGQL, TALQELRLGGNAFTGTVPAEIGRC, ALQVLDLEDNRFSGEVPAALGG, LRRLREVYLGGNSFSGQIPASLGNL, SWLEALSTPGNRLTGDLPSELFVL, GNLTFLDLSDNKLAGEIPPSIGNL, ALQSLNLSGNSFSGRIPSNIGNL, NLRVLDLSGQKNLSGNLPAELFGL, PQLQYVSLAGNSFSGDVPEGFSS, WSLRHLNLSVNSFTGSMPATYGY, LPSLQVLSASHNRICGELPVELANC, SNLTVLDLRSNQLTGPIPGDFAR, LGELEELDLSHNQLSRKIPPEISNC, SLVTLKLDDNHLGGEIPASLSNL, SKLQTLDLSSNNLTGSIPASLAQI, and GMLSLNVSQNELSGEIPAMLGSR. Residue Asn-149 is glycosylated (N-linked (GlcNAc...) asparagine). Asn-192, Asn-204, and Asn-244 each carry an N-linked (GlcNAc...) asparagine glycan. The N-linked (GlcNAc...) asparagine glycan is linked to Asn-296. Asn-438 is a glycosylation site (N-linked (GlcNAc...) asparagine). N-linked (GlcNAc...) asparagine glycans are attached at residues Asn-465, Asn-494, and Asn-524. 7 N-linked (GlcNAc...) asparagine glycosylation sites follow: Asn-567, Asn-607, Asn-610, Asn-655, Asn-679, Asn-692, and Asn-711. Residues 765 to 785 traverse the membrane as a helical segment; the sequence is LALLIGVVAATVLLLVLFCCC. A disordered region spans residues 804–825; sequence VKKRRRSPGRGSGSSGTSTDSV. Residues 849–1144 enclose the Protein kinase domain; sequence FDEENVLSRG…LEGCRVGPDI (296 aa). Residues 855–863, 930–932, 936–939, 980–985, and Asp-998 contribute to the ATP site; these read LSRGRHGLV, DYM, NLAT, and DVKPQN.

It belongs to the protein kinase superfamily. Ser/Thr protein kinase family. As to expression, expressed in developing culm, coleoptile, primary root, young spikelet, young leaf blade and leaf sheath, floral meristem primordia, stamen primordia, and lemma and palea primordia.

The protein resides in the cell membrane. Functions in the early stages of organ development by regulating cell division rate. Is probably involved in the regulation of a number of cell-cycle genes. May act as regulator of brassinosteroid (BR) signaling and cell-cycle controlling organ growth. This Oryza sativa subsp. japonica (Rice) protein is Probable inactive leucine-rich repeat receptor kinase XIAO.